A 200-amino-acid chain; its full sequence is NADH-ubiquinone oxidoreductase 21.3 kDa subunit (200 aa).

The next 3 helical transmembrane spans lie at 16–36 (IKSG…MASL), 48–68 (MHVF…GGIY), and 105–125 (FPVI…FAFS).

In terms of assembly, complex I is composed of about 40 different subunits.

The protein localises to the mitochondrion inner membrane. The enzyme catalyses a ubiquinone + NADH + 5 H(+)(in) = a ubiquinol + NAD(+) + 4 H(+)(out). Functionally, transfer of electrons from NADH to the respiratory chain. The immediate electron acceptor for the enzyme is believed to be ubiquinone. The chain is NADH-ubiquinone oxidoreductase 21.3 kDa subunit from Neurospora crassa (strain ATCC 24698 / 74-OR23-1A / CBS 708.71 / DSM 1257 / FGSC 987).